A 334-amino-acid polypeptide reads, in one-letter code: Dual specificity mitogen-activated protein kinase kinase 6 (334 aa).

The segment covering 1–11 (MSQSKGKKRNP) has biased composition (basic residues). Residues 1–34 (MSQSKGKKRNPGLKIPKEAFEQPQTSSTPPRDLD) are disordered. The tract at residues 4–19 (SKGKKRNPGLKIPKEA) is d domain. Residues 53 to 314 (LEPIVELGRG…YPELMQHPFF (262 aa)) form the Protein kinase domain. ATP is bound by residues 59-67 (LGRGAYGVV) and K82. The active-site Proton acceptor is D179. Position 207 is a phosphoserine; by MAPK3 (S207). Position 211 is a phosphothreonine; by MAPK3 (T211). Positions 311 to 334 (HPFFTLHESKATDVASFVKSILGD) are DVD domain.

The protein belongs to the protein kinase superfamily. STE Ser/Thr protein kinase family. MAP kinase kinase subfamily. Dimer. Interacts (via its D domain) with its substrates MAPK11, MAPK12, MAPK13 and MAPK14. Interacts (via its DVD domain) with MAP3Ks activators like MAP3K5/ASK1, MAP3K1/MEKK1, MAP3K2/MEKK2, MAP3K3/MEKK3, MAP3K4/MEKK4, MAP3K7/TAK1, MAP3K11/MLK3 and MAP3K17/TAOK2. Interacts with DCTN1. Interacts with EIF2AK2/PKR. Weakly autophosphorylated. Phosphorylated at Ser-207 and Thr-211 by the majority of M3Ks, such as MAP3K5/ASK1, MAP3K1/MEKK1, MAP3K2/MEKK2, MAP3K3/MEKK3, MAP3K4/MEKK4, MAP3K7/TAK1, MAP3K11/MLK3 and MAP3K17/TAOK2. In terms of processing, in response to genotoxic stress, MAP3K-phosphorylated MAP2K6 is ubiquitinated and degraded by the SCF(FBXO31) complex.

The protein localises to the nucleus. It localises to the cytoplasm. Its subcellular location is the cytoskeleton. It carries out the reaction L-seryl-[protein] + ATP = O-phospho-L-seryl-[protein] + ADP + H(+). The catalysed reaction is L-threonyl-[protein] + ATP = O-phospho-L-threonyl-[protein] + ADP + H(+). The enzyme catalyses L-tyrosyl-[protein] + ATP = O-phospho-L-tyrosyl-[protein] + ADP + H(+). Activated by dual phosphorylation on Ser-207 and Thr-211 in response to a variety of cellular stresses, including UV radiation, osmotic shock, hypoxia, inflammatory cytokines, interferon gamma (IFNG), and less often by growth factors. MAP2K6/MKK6 is activated by the majority of M3Ks, such as MAP3K5/ASK1, MAP3K1/MEKK1, MAP3K2/MEKK2, MAP3K3/MEKK3, MAP3K4/MEKK4, MAP3K7/TAK1, MAP3K11/MLK3 and MAP3K17/TAOK2. Its function is as follows. Dual specificity protein kinase which acts as an essential component of the MAP kinase signal transduction pathway. With MAP3K3/MKK3, catalyzes the concomitant phosphorylation of a threonine and a tyrosine residue in the MAP kinases p38 MAPK11, MAPK12, MAPK13 and MAPK14 and plays an important role in the regulation of cellular responses to cytokines and all kinds of stresses. Especially, MAP2K3/MKK3 and MAP2K6/MKK6 are both essential for the activation of MAPK11 and MAPK13 induced by environmental stress, whereas MAP2K6/MKK6 is the major MAPK11 activator in response to TNF. MAP2K6/MKK6 also phosphorylates and activates PAK6. The p38 MAP kinase signal transduction pathway leads to direct activation of transcription factors. Nuclear targets of p38 MAP kinase include the transcription factors ATF2 and ELK1. Within the p38 MAPK signal transduction pathway, MAP3K6/MKK6 mediates phosphorylation of STAT4 through MAPK14 activation, and is therefore required for STAT4 activation and STAT4-regulated gene expression in response to IL-12 stimulation. The pathway is also crucial for IL-6-induced SOCS3 expression and down-regulation of IL-6-mediated gene induction; and for IFNG-dependent gene transcription. Has a role in osteoclast differentiation through NF-kappa-B transactivation by TNFSF11, and in endochondral ossification and since SOX9 is another likely downstream target of the p38 MAPK pathway. MAP2K6/MKK6 mediates apoptotic cell death in thymocytes. Acts also as a regulator for melanocytes dendricity, through the modulation of Rho family GTPases. The sequence is that of Dual specificity mitogen-activated protein kinase kinase 6 (MAP2K6) from Bos taurus (Bovine).